A 102-amino-acid polypeptide reads, in one-letter code: Small ribosomal subunit protein uS10 (102 aa).

This sequence belongs to the universal ribosomal protein uS10 family. Part of the 30S ribosomal subunit.

In terms of biological role, involved in the binding of tRNA to the ribosomes. This is Small ribosomal subunit protein uS10 from Cupriavidus metallidurans (strain ATCC 43123 / DSM 2839 / NBRC 102507 / CH34) (Ralstonia metallidurans).